The primary structure comprises 365 residues: Succinyl-diaminopimelate desuccinylase (365 aa).

A Zn(2+)-binding site is contributed by His64. The active site involves Asp66. Asp95 contributes to the Zn(2+) binding site. The Proton acceptor role is filled by Glu125. Zn(2+) is bound by residues Glu126, Glu154, and His339.

Belongs to the peptidase M20A family. DapE subfamily. In terms of assembly, homodimer. The cofactor is Zn(2+). Co(2+) serves as cofactor.

It carries out the reaction N-succinyl-(2S,6S)-2,6-diaminopimelate + H2O = (2S,6S)-2,6-diaminopimelate + succinate. It participates in amino-acid biosynthesis; L-lysine biosynthesis via DAP pathway; LL-2,6-diaminopimelate from (S)-tetrahydrodipicolinate (succinylase route): step 3/3. Catalyzes the hydrolysis of N-succinyl-L,L-diaminopimelic acid (SDAP), forming succinate and LL-2,6-diaminopimelate (DAP), an intermediate involved in the bacterial biosynthesis of lysine and meso-diaminopimelic acid, an essential component of bacterial cell walls. The polypeptide is Succinyl-diaminopimelate desuccinylase (Campylobacter curvus (strain 525.92)).